Here is a 232-residue protein sequence, read N- to C-terminus: Thiamine import ATP-binding protein ThiQ (232 aa).

In terms of domain architecture, ABC transporter spans 2–230 (LKLTDITWLY…KASASALLGI (229 aa)). 32–39 (GPSGAGKS) is a binding site for ATP.

Belongs to the ABC transporter superfamily. Thiamine importer (TC 3.A.1.19.1) family. The complex is composed of two ATP-binding proteins (ThiQ), two transmembrane proteins (ThiP) and a solute-binding protein (ThiB).

Its subcellular location is the cell inner membrane. The enzyme catalyses thiamine(out) + ATP + H2O = thiamine(in) + ADP + phosphate + H(+). In terms of biological role, part of the ABC transporter complex ThiBPQ involved in thiamine import. Responsible for energy coupling to the transport system. This is Thiamine import ATP-binding protein ThiQ from Escherichia coli (strain UTI89 / UPEC).